Reading from the N-terminus, the 69-residue chain is NIQKESTLHLVLRLRGGIIEPSLRQLAQKYNCDKMICRKCYARLHPRAVNCRKKKCGHTNNLRPKKKVK.

The region spanning 1–17 (NIQKESTLHLVLRLRGG) is the Ubiquitin-like domain. Residue lysine 4 forms a Glycyl lysine isopeptide (Lys-Gly) (interchain with G-Cter in ubiquitin) linkage. Glycine 17 is covalently cross-linked (Glycyl lysine isopeptide (Gly-Lys) (interchain with K-? in acceptor proteins)). At lysine 39 the chain carries N6,N6,N6-trimethyllysine.

This sequence in the N-terminal section; belongs to the ubiquitin family. The protein in the C-terminal section; belongs to the eukaryotic ribosomal protein eL40 family. As to quaternary structure, part of the 60S ribosomal subunit. In terms of processing, trimethylation of Lys-39 ('Lys-22' of the mature chain) by SMYD5 promotes translation elongation and protein synthesis.

It localises to the cytoplasm. Its subcellular location is the nucleus. Exists either covalently attached to another protein, or free (unanchored). When covalently bound, it is conjugated to target proteins via an isopeptide bond either as a monomer (monoubiquitin), a polymer linked via different Lys residues of the ubiquitin (polyubiquitin chains) or a linear polymer linked via the initiator Met of the ubiquitin (linear polyubiquitin chains). Polyubiquitin chains, when attached to a target protein, have different functions depending on the Lys residue of the ubiquitin that is linked: Lys-6-linked may be involved in DNA repair; Lys-11-linked is involved in ERAD (endoplasmic reticulum-associated degradation) and in cell-cycle regulation; Lys-29-linked is involved in proteotoxic stress response and cell cycle; Lys-33-linked is involved in kinase modification; Lys-48-linked is involved in protein degradation via the proteasome; Lys-63-linked is involved in endocytosis, DNA-damage responses as well as in signaling processes leading to activation of the transcription factor NF-kappa-B. Linear polymer chains formed via attachment by the initiator Met lead to cell signaling. Ubiquitin is usually conjugated to Lys residues of target proteins, however, in rare cases, conjugation to Cys or Ser residues has been observed. When polyubiquitin is free (unanchored-polyubiquitin), it also has distinct roles, such as in activation of protein kinases, and in signaling. In terms of biological role, component of the 60S subunit of the ribosome. This Gallus gallus (Chicken) protein is Ubiquitin-ribosomal protein eL40 fusion protein (UBA52).